A 239-amino-acid polypeptide reads, in one-letter code: Pyridoxine 5'-phosphate synthase (239 aa).

A 3-amino-2-oxopropyl phosphate-binding site is contributed by Asn-7. Residue 9 to 10 coordinates 1-deoxy-D-xylulose 5-phosphate; the sequence is DH. Arg-18 contacts 3-amino-2-oxopropyl phosphate. The active-site Proton acceptor is His-43. The 1-deoxy-D-xylulose 5-phosphate site is built by Arg-45 and His-50. The active-site Proton acceptor is Glu-70. Position 100 (Thr-100) interacts with 1-deoxy-D-xylulose 5-phosphate. The active-site Proton donor is the His-191. Residues Gly-192 and 213-214 each bind 3-amino-2-oxopropyl phosphate; that span reads GH.

The protein belongs to the PNP synthase family. As to quaternary structure, homooctamer; tetramer of dimers.

Its subcellular location is the cytoplasm. It carries out the reaction 3-amino-2-oxopropyl phosphate + 1-deoxy-D-xylulose 5-phosphate = pyridoxine 5'-phosphate + phosphate + 2 H2O + H(+). It functions in the pathway cofactor biosynthesis; pyridoxine 5'-phosphate biosynthesis; pyridoxine 5'-phosphate from D-erythrose 4-phosphate: step 5/5. Functionally, catalyzes the complicated ring closure reaction between the two acyclic compounds 1-deoxy-D-xylulose-5-phosphate (DXP) and 3-amino-2-oxopropyl phosphate (1-amino-acetone-3-phosphate or AAP) to form pyridoxine 5'-phosphate (PNP) and inorganic phosphate. In Geobacter sp. (strain M21), this protein is Pyridoxine 5'-phosphate synthase.